The primary structure comprises 750 residues: Polyribonucleotide nucleotidyltransferase (750 aa).

Mg(2+) is bound by residues Asp-492 and Asp-498. The region spanning 559–618 (PQLSVVEVNPEIIRVIIGPGGKNIKAITSATGASIDIEDSGRISIFAPTKESMDMAREMV) is the KH domain. The 68-residue stretch at 628–695 (GKNYTAKVRK…NDGRVRASRK (68 aa)) folds into the S1 motif domain. Residues 705–750 (EWDPADTARPPRKPRDRDDRGDRGGRGDRGDRGGRNGRGGDRRDRR) form a disordered region. Over residues 717 to 750 (KPRDRDDRGDRGGRGDRGDRGGRNGRGGDRRDRR) the composition is skewed to basic and acidic residues.

The protein belongs to the polyribonucleotide nucleotidyltransferase family. The cofactor is Mg(2+).

It localises to the cytoplasm. It carries out the reaction RNA(n+1) + phosphate = RNA(n) + a ribonucleoside 5'-diphosphate. In terms of biological role, involved in mRNA degradation. Catalyzes the phosphorolysis of single-stranded polyribonucleotides processively in the 3'- to 5'-direction. The sequence is that of Polyribonucleotide nucleotidyltransferase from Oleidesulfovibrio alaskensis (strain ATCC BAA-1058 / DSM 17464 / G20) (Desulfovibrio alaskensis).